A 510-amino-acid chain; its full sequence is NAD(P)H-quinone oxidoreductase subunit 2 A, chloroplastic (510 aa).

12 helical membrane passes run 24–44, 59–79, 99–119, 124–144, 149–169, 183–203, 229–249, 295–315, 323–343, 354–374, 395–415, and 418–438; these read LLLF…GLIL, WFYF…LFRW, IFQF…VEYI, MAIT…MFLC, LITL…LSGY, YLLM…WLYG, ISIA…PAPF, WHLL…LIAI, MLAY…IVGD, YMLF…SFGL, ALSL…AGFF, and LHLF…IGLL.

This sequence belongs to the complex I subunit 2 family. NDH is composed of at least 16 different subunits, 5 of which are encoded in the nucleus.

The protein localises to the plastid. Its subcellular location is the chloroplast thylakoid membrane. The catalysed reaction is a plastoquinone + NADH + (n+1) H(+)(in) = a plastoquinol + NAD(+) + n H(+)(out). The enzyme catalyses a plastoquinone + NADPH + (n+1) H(+)(in) = a plastoquinol + NADP(+) + n H(+)(out). Functionally, NDH shuttles electrons from NAD(P)H:plastoquinone, via FMN and iron-sulfur (Fe-S) centers, to quinones in the photosynthetic chain and possibly in a chloroplast respiratory chain. The immediate electron acceptor for the enzyme in this species is believed to be plastoquinone. Couples the redox reaction to proton translocation, and thus conserves the redox energy in a proton gradient. This chain is NAD(P)H-quinone oxidoreductase subunit 2 A, chloroplastic, found in Dioscorea elephantipes (Elephant's foot yam).